Consider the following 279-residue polypeptide: HTH-type transcriptional regulator HdfR (279 aa).

Residues 1–58 (MDTELLKTFLEVSRTRHFGRAAESLYLTQSAVSFRIRQLENQLGVNLFTRHRNNIRLT) form the HTH lysR-type domain. The segment at residues 18-37 (FGRAAESLYLTQSAVSFRIR) is a DNA-binding region (H-T-H motif).

The protein belongs to the LysR transcriptional regulatory family.

Its function is as follows. Negatively regulates the transcription of the flagellar master operon flhDC by binding to the upstream region of the operon. This is HTH-type transcriptional regulator HdfR from Escherichia fergusonii (strain ATCC 35469 / DSM 13698 / CCUG 18766 / IAM 14443 / JCM 21226 / LMG 7866 / NBRC 102419 / NCTC 12128 / CDC 0568-73).